The chain runs to 200 residues: dITP/XTP pyrophosphatase (200 aa).

A substrate-binding site is contributed by 8–13; it reads TGNQGK. Asp69 serves as the catalytic Proton acceptor. Asp69 contacts Mg(2+). Substrate is bound by residues Ser70, 154–157, Lys177, and 182–183; these read FGYD and HR.

The protein belongs to the HAM1 NTPase family. Homodimer. It depends on Mg(2+) as a cofactor.

It carries out the reaction XTP + H2O = XMP + diphosphate + H(+). The enzyme catalyses dITP + H2O = dIMP + diphosphate + H(+). The catalysed reaction is ITP + H2O = IMP + diphosphate + H(+). In terms of biological role, pyrophosphatase that catalyzes the hydrolysis of nucleoside triphosphates to their monophosphate derivatives, with a high preference for the non-canonical purine nucleotides XTP (xanthosine triphosphate), dITP (deoxyinosine triphosphate) and ITP. Seems to function as a house-cleaning enzyme that removes non-canonical purine nucleotides from the nucleotide pool, thus preventing their incorporation into DNA/RNA and avoiding chromosomal lesions. The protein is dITP/XTP pyrophosphatase of Vibrio parahaemolyticus serotype O3:K6 (strain RIMD 2210633).